Reading from the N-terminus, the 328-residue chain is Glycerol-3-phosphate dehydrogenase [NAD(P)+] (328 aa).

NADPH contacts are provided by Trp15, His35, Tyr51, and Lys107. 3 residues coordinate sn-glycerol 3-phosphate: Lys107, Gly135, and Ser137. Position 139 (Ala139) interacts with NADPH. Sn-glycerol 3-phosphate-binding residues include Lys190, Asp243, Ser253, Arg254, and Asn255. Residue Lys190 is the Proton acceptor of the active site. An NADPH-binding site is contributed by Arg254. Leu276 and Glu278 together coordinate NADPH.

It belongs to the NAD-dependent glycerol-3-phosphate dehydrogenase family.

Its subcellular location is the cytoplasm. It catalyses the reaction sn-glycerol 3-phosphate + NAD(+) = dihydroxyacetone phosphate + NADH + H(+). The catalysed reaction is sn-glycerol 3-phosphate + NADP(+) = dihydroxyacetone phosphate + NADPH + H(+). Its pathway is membrane lipid metabolism; glycerophospholipid metabolism. Catalyzes the reduction of the glycolytic intermediate dihydroxyacetone phosphate (DHAP) to sn-glycerol 3-phosphate (G3P), the key precursor for phospholipid synthesis. The chain is Glycerol-3-phosphate dehydrogenase [NAD(P)+] from Rhodopseudomonas palustris (strain BisA53).